Here is a 297-residue protein sequence, read N- to C-terminus: MSKVSDLYDVTWEDMRDKMKTWREDNYRNSEQIVDVGEELINEHASKLGDDVWIIYEQVMIAALDCGRDDIAMSCLQELRRQFPGSHRVKRLTGLRFEAMERYDDALQIYDRILQDDPTNTATRKRKIAIRKAQGRNAEAIRELNEYLEQFVGDQEAWHELAELYINELDYAKAAFCLEELILTNPHNHFYYQQFAEVKYTQGGLENLELSRKYFSQALKLNNHSMRALFGLYMSSVHIASNPKASAKMKKDNVKYATWATSQIKKAYQLAGRTMTDTQTSLKAVEDMLETLQITPS.

TPR repeat units follow at residues 87-120 (HRVK…DPTN), 155-188 (QEAW…NPHN), and 192-225 (YQQF…NNHS).

Belongs to the EMC2 family. As to quaternary structure, component of the ER membrane protein complex (EMC).

Its subcellular location is the endoplasmic reticulum membrane. In terms of biological role, part of the endoplasmic reticulum membrane protein complex (EMC) that enables the energy-independent insertion into endoplasmic reticulum membranes of newly synthesized membrane proteins. Preferentially accommodates proteins with transmembrane domains that are weakly hydrophobic or contain destabilizing features such as charged and aromatic residues. Involved in the cotranslational insertion of multi-pass membrane proteins in which stop-transfer membrane-anchor sequences become ER membrane spanning helices. It is also required for the post-translational insertion of tail-anchored/TA proteins in endoplasmic reticulum membranes. By mediating the proper cotranslational insertion of N-terminal transmembrane domains in an N-exo topology, with translocated N-terminus in the lumen of the ER, controls the topology of multi-pass membrane proteins. By regulating the insertion of various proteins in membranes, it is indirectly involved in many cellular processes. The polypeptide is ER membrane protein complex subunit 2-B (emc2-b) (Xenopus laevis (African clawed frog)).